Reading from the N-terminus, the 143-residue chain is Large ribosomal subunit protein uL13 (143 aa).

This sequence belongs to the universal ribosomal protein uL13 family. Part of the 50S ribosomal subunit.

Its function is as follows. This protein is one of the early assembly proteins of the 50S ribosomal subunit, although it is not seen to bind rRNA by itself. It is important during the early stages of 50S assembly. The sequence is that of Large ribosomal subunit protein uL13 from Alkaliphilus oremlandii (strain OhILAs) (Clostridium oremlandii (strain OhILAs)).